The chain runs to 868 residues: mRNA-capping enzyme (868 aa).

The active-site N6-GMP-lysine intermediate is the Lys-282. The 275-residue stretch at Gly-594–Asn-868 folds into the mRNA cap 0 methyltransferase domain. Residues Lys-607, Gly-624, Asp-646, and Leu-710–Ile-712 each bind S-adenosyl-L-methionine.

The protein in the N-terminal section; belongs to the dsDNA virus mRNA guanylyltransferase family. It in the C-terminal section; belongs to the class I-like SAM-binding methyltransferase superfamily. mRNA cap 0 methyltransferase family. As to quaternary structure, part of the viral DNA-directed RNA polymerase that consists of 8 polII-like subunits (RPB1, RPB2, RPB3, RPB5, RPB6, RPB7, RPB9, RPB10), a capping enzyme and a termination factor.

It is found in the virion. The enzyme catalyses a 5'-end triphospho-ribonucleoside in mRNA + H2O = a 5'-end diphospho-ribonucleoside in mRNA + phosphate + H(+). The catalysed reaction is a 5'-end diphospho-ribonucleoside in mRNA + GTP + H(+) = a 5'-end (5'-triphosphoguanosine)-ribonucleoside in mRNA + diphosphate. It carries out the reaction a 5'-end (5'-triphosphoguanosine)-ribonucleoside in mRNA + S-adenosyl-L-methionine = a 5'-end (N(7)-methyl 5'-triphosphoguanosine)-ribonucleoside in mRNA + S-adenosyl-L-homocysteine. It functions in the pathway mRNA processing; mRNA capping. Its function is as follows. Probably catalyzes the second reaction in the mRNA cap formation pathway. Forms a covalent complex with GTP. The chain is mRNA-capping enzyme from African swine fever virus (isolate Tick/South Africa/Pretoriuskop Pr4/1996) (ASFV).